The sequence spans 313 residues: MAFHYPDHGLAMDPSSAAASSPNPSFSPGGGGGGGVGGGEREKAAVAAHPLYERLLEAHVACLRVATPVDQLPRIDAQIAARPPPLAAASAAAAAGGPSGGEELDLFMTHYVLLLCSFKEQLQQHVRVHAMEAVMGCWELEQSLQSLTGASPGEGTGATMSDDEDNQVDSEANMFDGNDGSDGMGFGPLMLTEGERSLVERVRHELKNELKQGYKEKLVDIREEILRKRRAGKLPGDTASILKAWWQAHSKWPYPTEDDKARLVQETGLQLKQINNWFINQRKRNWHSNPASSGEKTKKKRNVTGDGGAEQSW.

Residues 13–40 (DPSSAAASSPNPSFSPGGGGGGGVGGGE) form a disordered region. Positions 14–27 (PSSAAASSPNPSFS) are enriched in low complexity. Residues 28-38 (PGGGGGGGVGG) are compositionally biased toward gly residues. Residues 205–225 (ELKNELKQGYKEKLVDIREEI) enclose the ELK domain. The homeobox; TALE-type DNA-binding region spans 226-289 (LRKRRAGKLP…NQRKRNWHSN (64 aa)). The disordered stretch occupies residues 282–313 (RKRNWHSNPASSGEKTKKKRNVTGDGGAEQSW).

This sequence belongs to the TALE/KNOX homeobox family. Isoform 1 is expressed in roots, leaf blades, leaf sheaths and flowers. Isoform 2 is expressed in leaf blades, leaf sheaths and flowers.

It localises to the nucleus. The polypeptide is Homeobox protein knotted-1-like 2 (HOS58) (Oryza sativa subsp. japonica (Rice)).